Here is a 57-residue protein sequence, read N- to C-terminus: Ribulose bisphosphate carboxylase large chain (57 aa).

The propeptide occupies 1–2; sequence MS. Pro3 is subject to N-acetylproline. Residue Lys14 is modified to N6,N6,N6-trimethyllysine.

The protein belongs to the RuBisCO large chain family. Type I subfamily. As to quaternary structure, heterohexadecamer of 8 large chains and 8 small chains.

The protein resides in the plastid. It is found in the chloroplast. It catalyses the reaction 2 (2R)-3-phosphoglycerate + 2 H(+) = D-ribulose 1,5-bisphosphate + CO2 + H2O. The catalysed reaction is D-ribulose 1,5-bisphosphate + O2 = 2-phosphoglycolate + (2R)-3-phosphoglycerate + 2 H(+). Functionally, ruBisCO catalyzes two reactions: the carboxylation of D-ribulose 1,5-bisphosphate, the primary event in carbon dioxide fixation, as well as the oxidative fragmentation of the pentose substrate in the photorespiration process. Both reactions occur simultaneously and in competition at the same active site. This is Ribulose bisphosphate carboxylase large chain (rbcL) from Buxus sempervirens (Common box).